Reading from the N-terminus, the 223-residue chain is Neurotrophic factor BDNF precursor form (223 aa).

A signal peptide spans 1-5 (SCMKA). Residues 6–114 (APMKEVSIRG…AANMSMRVRR (109 aa)) constitute a propeptide that is removed on maturation. The N-linked (GlcNAc...) asparagine glycan is linked to Asn107. Cystine bridges form between Cys127–Cys194 and Cys172–Cys223.

Belongs to the NGF-beta family.

The protein resides in the secreted. Its function is as follows. Promotes the survival of neuronal populations that are all located either in the central nervous system or directly connected to it. This is Neurotrophic factor BDNF precursor form (BDNF) from Eryx colubrinus colubrinus.